The following is a 362-amino-acid chain: Chorismate synthase (362 aa).

Residue R47 coordinates NADP(+). Residues R124–S126, G286, K301–T305, and R327 each bind FMN.

The protein belongs to the chorismate synthase family. As to quaternary structure, homotetramer. FMNH2 is required as a cofactor.

The enzyme catalyses 5-O-(1-carboxyvinyl)-3-phosphoshikimate = chorismate + phosphate. The protein operates within metabolic intermediate biosynthesis; chorismate biosynthesis; chorismate from D-erythrose 4-phosphate and phosphoenolpyruvate: step 7/7. Catalyzes the anti-1,4-elimination of the C-3 phosphate and the C-6 proR hydrogen from 5-enolpyruvylshikimate-3-phosphate (EPSP) to yield chorismate, which is the branch point compound that serves as the starting substrate for the three terminal pathways of aromatic amino acid biosynthesis. This reaction introduces a second double bond into the aromatic ring system. In Synechococcus sp. (strain ATCC 27144 / PCC 6301 / SAUG 1402/1) (Anacystis nidulans), this protein is Chorismate synthase.